The sequence spans 193 residues: Peptidyl-tRNA hydrolase (193 aa).

Tyrosine 15 is a binding site for tRNA. Histidine 20 (proton acceptor) is an active-site residue. Phenylalanine 65, asparagine 67, and asparagine 113 together coordinate tRNA.

It belongs to the PTH family. As to quaternary structure, monomer.

Its subcellular location is the cytoplasm. It carries out the reaction an N-acyl-L-alpha-aminoacyl-tRNA + H2O = an N-acyl-L-amino acid + a tRNA + H(+). Functionally, hydrolyzes ribosome-free peptidyl-tRNAs (with 1 or more amino acids incorporated), which drop off the ribosome during protein synthesis, or as a result of ribosome stalling. Catalyzes the release of premature peptidyl moieties from peptidyl-tRNA molecules trapped in stalled 50S ribosomal subunits, and thus maintains levels of free tRNAs and 50S ribosomes. This is Peptidyl-tRNA hydrolase from Ehrlichia canis (strain Jake).